Reading from the N-terminus, the 277-residue chain is 3-methyl-2-oxobutanoate hydroxymethyltransferase (277 aa).

Mg(2+)-binding residues include Asp43 and Asp82. 3-methyl-2-oxobutanoate-binding positions include 43–44, Asp82, and Lys112; that span reads DS. Glu114 lines the Mg(2+) pocket. Glu181 serves as the catalytic Proton acceptor.

It belongs to the PanB family. As to quaternary structure, homodecamer; pentamer of dimers. Requires Mg(2+) as cofactor.

It is found in the cytoplasm. The catalysed reaction is 3-methyl-2-oxobutanoate + (6R)-5,10-methylene-5,6,7,8-tetrahydrofolate + H2O = 2-dehydropantoate + (6S)-5,6,7,8-tetrahydrofolate. It participates in cofactor biosynthesis; (R)-pantothenate biosynthesis; (R)-pantoate from 3-methyl-2-oxobutanoate: step 1/2. In terms of biological role, catalyzes the reversible reaction in which hydroxymethyl group from 5,10-methylenetetrahydrofolate is transferred onto alpha-ketoisovalerate to form ketopantoate. This is 3-methyl-2-oxobutanoate hydroxymethyltransferase from Bacillus subtilis (strain 168).